Consider the following 147-residue polypeptide: Putative pre-16S rRNA nuclease (147 aa).

The protein belongs to the YqgF nuclease family.

It is found in the cytoplasm. Could be a nuclease involved in processing of the 5'-end of pre-16S rRNA. The sequence is that of Putative pre-16S rRNA nuclease from Limosilactobacillus reuteri (strain DSM 20016) (Lactobacillus reuteri).